We begin with the raw amino-acid sequence, 538 residues long: Syncytin-2 (538 aa).

Positions 1 to 15 (MGLLLLVLILTPLLA) are cleaved as a signal peptide. The Extracellular portion of the chain corresponds to 31 to 478 (LLQSTGSPYS…GWLNWEGTWK (448 aa)). The CXXC signature appears at 43–46 (CWLC). Cystine bridges form between Cys-43–Cys-46, Cys-43–Cys-439, and Cys-431–Cys-438. Residues Asn-133, Asn-146, Asn-177, Asn-220, Asn-241, Asn-247, Asn-312, and Asn-332 are each glycosylated (N-linked (GlcNAc...) asparagine). Residues 354-374 (FIPLLAGLGILAGTGTGIAGI) form a fusion peptide region. A CKS-17 motif is present at residues 414–430 (LQNRRGLDMLTAAQGGI). Residues 431-439 (CLALDEKCC) carry the CX6CC motif. Residue Asn-443 is glycosylated (N-linked (GlcNAc...) asparagine). A helical membrane pass occupies residues 479 to 499 (WFSWVLPFIGPFVSLLLLLLF). Residues 500-538 (GPCLLNLITQFVSSRLQAIKLQTNLSAGRRPRTIQESPF) are Cytoplasmic-facing.

Belongs to the gamma type-C retroviral envelope protein family. HERV class-I FRD env subfamily. As to quaternary structure, the surface and transmembrane proteins form a heterodimer. They are attached by non-covalent interactions or by a labile interchain disulfide bond. Specific enzymatic cleavages in vivo yield the mature SU and TM proteins. In terms of processing, the CXXC motif is highly conserved across a broad range of retroviral envelope proteins. It is thought to participate in the formation of a labile disulfide bond possibly with the CX6CC motif present in the transmembrane protein.

Its subcellular location is the cell membrane. In terms of biological role, this endogenous retroviral envelope protein has retained its original fusogenic properties and participates in trophoblast fusion and the formation of a syncytium during placenta morphogenesis. The interaction with MFSD2A is apparently important for this process. Endogenous envelope proteins may have kept, lost or modified their original function during evolution and this one is unable to confer infectivity. The sequence is that of Syncytin-2 (ERVFRD-1) from Hylobates moloch (Silvery gibbon).